Reading from the N-terminus, the 879-residue chain is DNA mismatch repair protein MutS (879 aa).

629–636 (GPNMAGKS) is an ATP binding site. Residues 824–845 (VGGQPQKELSEHKPHQPSLFAP) form a disordered region.

The protein belongs to the DNA mismatch repair MutS family.

Its function is as follows. This protein is involved in the repair of mismatches in DNA. It is possible that it carries out the mismatch recognition step. This protein has a weak ATPase activity. This is DNA mismatch repair protein MutS from Desulfotalea psychrophila (strain LSv54 / DSM 12343).